The sequence spans 211 residues: Dual specificity protein phosphatase 26 (211 aa).

Positions 60–207 (NHADEVWPGL…LLALDRRLRQ (148 aa)) constitute a Tyrosine-protein phosphatase domain. The active-site Phosphocysteine intermediate is C152.

The protein belongs to the protein-tyrosine phosphatase family. Non-receptor class dual specificity subfamily. As to quaternary structure, interacts with HSF4.

Its subcellular location is the cytoplasm. The protein localises to the nucleus. It is found in the golgi apparatus. The enzyme catalyses O-phospho-L-tyrosyl-[protein] + H2O = L-tyrosyl-[protein] + phosphate. The catalysed reaction is O-phospho-L-seryl-[protein] + H2O = L-seryl-[protein] + phosphate. It catalyses the reaction O-phospho-L-threonyl-[protein] + H2O = L-threonyl-[protein] + phosphate. Its function is as follows. Inactivates MAPK1 and MAPK3 which leads to dephosphorylation of heat shock factor protein 4 and a reduction in its DNA-binding activity. The chain is Dual specificity protein phosphatase 26 (DUSP26) from Bos taurus (Bovine).